The primary structure comprises 163 residues: Interleukin-17F (163 aa).

Residues 1–30 (MTVKSLHVTAMVKYLLLLILGLAFLRETAA) form the signal peptide. A glycan (N-linked (GlcNAc...) asparagine) is linked at Asn-83. Intrachain disulfides connect Cys-102–Cys-152 and Cys-107–Cys-154.

The protein belongs to the IL-17 family. As to quaternary structure, homodimer; disulfide-linked. Heterodimer with IL17A (IL17A-IL17F). Forms complexes with IL17RA and IL17RC receptors with 2:1 binding stoichiometry: two receptor chains for one interleukin molecule. IL17F homodimer forms predominantly complexes with IL17RC homodimer, whereas IL17A-IL17F favors complexes with IL17RA-IL17RC. IL17RA and IL17RC chains cannot distinguish between IL17A and IL17F molecules, potentially enabling the formation of topologically distinct complexes.

The protein resides in the secreted. Its function is as follows. Effector cytokine of innate and adaptive immune system involved in antimicrobial host defense and maintenance of tissue integrity. IL17A-IL17F signals via IL17RA-IL17RC heterodimeric receptor complex, triggering homotypic interaction of IL17RA and IL17RC chains with TRAF3IP2 adapter through SEFIR domains. This leads to downstream TRAF6-mediated activation of NF-kappa-B and MAPkinase pathways ultimately resulting in transcriptional activation of cytokines, chemokines, antimicrobial peptides and matrix metalloproteinases, with potential strong immune inflammation. IL17A-IL17F is primarily involved in host defense against extracellular bacteria and fungi by inducing neutrophilic inflammation. As signature effector cytokine of T-helper 17 cells (Th17), primarily induces neutrophil activation and recruitment at infection and inflammatory sites. Stimulates the production of antimicrobial beta-defensins DEFB1, DEFB103A, and DEFB104A by mucosal epithelial cells, limiting the entry of microbes through the epithelial barriers. IL17F homodimer can signal via IL17RC homodimeric receptor complex, triggering downstream activation of TRAF6 and NF-kappa-B signaling pathway. Via IL17RC induces transcriptional activation of IL33, a potent cytokine that stimulates group 2 innate lymphoid cells and adaptive T-helper 2 cells involved in pulmonary allergic response to fungi. Likely via IL17RC, promotes sympathetic innervation of peripheral organs by coordinating the communication between gamma-delta T cells and parenchymal cells. Stimulates sympathetic innervation of thermogenic adipose tissue by driving TGFB1 expression. Regulates the composition of intestinal microbiota and immune tolerance by inducing antimicrobial proteins that specifically control the growth of commensal Firmicutes and Bacteroidetes. This chain is Interleukin-17F (IL17F), found in Callithrix jacchus (White-tufted-ear marmoset).